Here is a 494-residue protein sequence, read N- to C-terminus: Catalase A (494 aa).

Over residues 1-23 (MTDRPTITTTAGAPVPDNQNSLT) the composition is skewed to polar residues. The segment at 1 to 25 (MTDRPTITTTAGAPVPDNQNSLTAG) is disordered. Active-site residues include His55 and Asn127. Tyr337 lines the heme pocket.

This sequence belongs to the catalase family. Heme is required as a cofactor.

The protein resides in the periplasm. It carries out the reaction 2 H2O2 = O2 + 2 H2O. In terms of biological role, decomposes hydrogen peroxide into water and oxygen; serves to protect cells from the toxic effects of hydrogen peroxide. In Rhizobium meliloti (strain 1021) (Ensifer meliloti), this protein is Catalase A (katA).